Here is a 300-residue protein sequence, read N- to C-terminus: ADP,ATP carrier protein 2 (300 aa).

3 Solcar repeats span residues 8 to 100, 113 to 203, and 214 to 299; these read VAFI…YKQV, RYFI…ARGM, and VSWA…IKKV. The next 5 membrane-spanning stretches (helical) occupy residues 10–39, 77–101, 112–132, 181–201, and 213–233; these read FIKDFAAGGISAAISKTAVAPIERVKLLLQ, LANVIRYFPTQALNFAFKDKYKQVF, TRYFIGNLASGGMAGATSLCF, VSVQGIIIYRAAYFGFYDTAR, and YVSWAIAQCVTTVAGIVSYPF. Residues Arg-82 and Lys-94 each coordinate ADP. Arg-237 serves as a coordination point for ADP. The tract at residues 237–242 is important for transport activity; that stretch reads RRRMMM. Positions 237–242 match the Nucleotide carrier signature motif motif; that stretch reads RRRMMM. Residues 276–293 traverse the membrane as a helical segment; that stretch reads AFSNVLRGTGGAFVLVLY.

It belongs to the mitochondrial carrier (TC 2.A.29) family. Monomer.

The protein localises to the mitochondrion inner membrane. It catalyses the reaction ADP(in) + ATP(out) = ADP(out) + ATP(in). The matrix-open state (m-state) is inhibited by the membrane-permeable bongkrekic acid (BKA). The cytoplasmic-open state (c-state) is inhibited by the membrane-impermeable toxic inhibitor carboxyatractyloside (CATR). Its function is as follows. ADP:ATP antiporter that mediates import of ADP into the mitochondrial matrix for ATP synthesis, and export of ATP out to fuel the cell. Cycles between the cytoplasmic-open state (c-state) and the matrix-open state (m-state): operates by the alternating access mechanism with a single substrate-binding site intermittently exposed to either the cytosolic (c-state) or matrix (m-state) side of the inner mitochondrial membrane. In Anopheles gambiae (African malaria mosquito), this protein is ADP,ATP carrier protein 2.